Here is a 291-residue protein sequence, read N- to C-terminus: Elongation factor Ts (291 aa).

Positions 80–83 (TDFV) are involved in Mg(2+) ion dislocation from EF-Tu.

This sequence belongs to the EF-Ts family.

The protein localises to the cytoplasm. Functionally, associates with the EF-Tu.GDP complex and induces the exchange of GDP to GTP. It remains bound to the aminoacyl-tRNA.EF-Tu.GTP complex up to the GTP hydrolysis stage on the ribosome. The chain is Elongation factor Ts from Acinetobacter baylyi (strain ATCC 33305 / BD413 / ADP1).